The primary structure comprises 448 residues: Adenylosuccinate synthetase (448 aa).

GTP is bound by residues 36 to 42 (GDEGKGK) and 64 to 66 (GHT). Aspartate 37 (proton acceptor) is an active-site residue. The Mg(2+) site is built by aspartate 37 and glycine 64. IMP-binding positions include 37-40 (DEGK), 62-65 (NAGH), threonine 154, arginine 168, asparagine 246, threonine 261, and arginine 325. The active-site Proton donor is the histidine 65. Substrate is bound at residue 321 to 327 (VTTKRKR). GTP-binding positions include arginine 327, 353–355 (KLD), and 436–438 (GVG).

It belongs to the adenylosuccinate synthetase family. Homodimer. Requires Mg(2+) as cofactor.

Its subcellular location is the cytoplasm. The catalysed reaction is IMP + L-aspartate + GTP = N(6)-(1,2-dicarboxyethyl)-AMP + GDP + phosphate + 2 H(+). Its pathway is purine metabolism; AMP biosynthesis via de novo pathway; AMP from IMP: step 1/2. Its function is as follows. Plays an important role in the de novo pathway and in the salvage pathway of purine nucleotide biosynthesis. Catalyzes the first committed step in the biosynthesis of AMP from IMP. The protein is Adenylosuccinate synthetase of Drosophila persimilis (Fruit fly).